Consider the following 382-residue polypeptide: S-adenosylmethionine synthase (382 aa).

His16 lines the ATP pocket. Asp18 serves as a coordination point for Mg(2+). K(+) is bound at residue Glu44. The L-methionine site is built by Glu57 and Gln100. The flexible loop stretch occupies residues 100–110; it reads QSADIAIGVDE. ATP contacts are provided by residues 165–167, Asp240, 246–247, Ala263, and Lys267; these read DAK and RK. L-methionine is bound at residue Asp240. Lys271 contributes to the L-methionine binding site.

This sequence belongs to the AdoMet synthase family. Homotetramer; dimer of dimers. Mg(2+) is required as a cofactor. The cofactor is K(+).

Its subcellular location is the cytoplasm. The catalysed reaction is L-methionine + ATP + H2O = S-adenosyl-L-methionine + phosphate + diphosphate. Its pathway is amino-acid biosynthesis; S-adenosyl-L-methionine biosynthesis; S-adenosyl-L-methionine from L-methionine: step 1/1. Catalyzes the formation of S-adenosylmethionine (AdoMet) from methionine and ATP. The overall synthetic reaction is composed of two sequential steps, AdoMet formation and the subsequent tripolyphosphate hydrolysis which occurs prior to release of AdoMet from the enzyme. This chain is S-adenosylmethionine synthase, found in Alcanivorax borkumensis (strain ATCC 700651 / DSM 11573 / NCIMB 13689 / SK2).